The primary structure comprises 346 residues: PhoH-like protein (346 aa).

142 to 149 lines the ATP pocket; it reads GPAGTGKT.

This sequence belongs to the PhoH family.

The protein localises to the cytoplasm. This Escherichia coli O157:H7 protein is PhoH-like protein (ybeZ).